A 254-amino-acid chain; its full sequence is tRNA (guanine-N(1)-)-methyltransferase (254 aa).

Residues glycine 119 and 139 to 144 each bind S-adenosyl-L-methionine; that span reads IGDFVL.

It belongs to the RNA methyltransferase TrmD family. In terms of assembly, homodimer.

It localises to the cytoplasm. The enzyme catalyses guanosine(37) in tRNA + S-adenosyl-L-methionine = N(1)-methylguanosine(37) in tRNA + S-adenosyl-L-homocysteine + H(+). Its function is as follows. Specifically methylates guanosine-37 in various tRNAs. This chain is tRNA (guanine-N(1)-)-methyltransferase, found in Dechloromonas aromatica (strain RCB).